A 519-amino-acid polypeptide reads, in one-letter code: Arabinose import ATP-binding protein AraG 2 (519 aa).

2 consecutive ABC transporter domains span residues 29–264 and 264–515; these read LSLD…MVGR and RSIE…LIKL. 61–68 is a binding site for ATP; sequence GENGAGKS.

Belongs to the ABC transporter superfamily. Arabinose importer (TC 3.A.1.2.2) family. As to quaternary structure, the complex is composed of two ATP-binding proteins (AraG), two transmembrane proteins (AraH) and a solute-binding protein (AraF).

The protein localises to the cell inner membrane. The catalysed reaction is L-arabinose(out) + ATP + H2O = L-arabinose(in) + ADP + phosphate + H(+). Part of the ABC transporter complex AraFGH involved in arabinose import. Responsible for energy coupling to the transport system. This chain is Arabinose import ATP-binding protein AraG 2, found in Burkholderia ambifaria (strain ATCC BAA-244 / DSM 16087 / CCUG 44356 / LMG 19182 / AMMD) (Burkholderia cepacia (strain AMMD)).